The sequence spans 305 residues: Glycine--tRNA ligase alpha subunit (305 aa).

It belongs to the class-II aminoacyl-tRNA synthetase family. As to quaternary structure, tetramer of two alpha and two beta subunits.

It localises to the cytoplasm. The catalysed reaction is tRNA(Gly) + glycine + ATP = glycyl-tRNA(Gly) + AMP + diphosphate. The chain is Glycine--tRNA ligase alpha subunit from Streptococcus suis (strain 05ZYH33).